Here is a 146-residue protein sequence, read N- to C-terminus: Large ribosomal subunit protein uL15 (146 aa).

A disordered region spans residues 1–61; the sequence is MELNSLKPAA…GGQMPMHRRL (61 aa). A compositionally biased stretch (basic residues) spans 30–39; that stretch reads TATKGHKGQK.

Belongs to the universal ribosomal protein uL15 family. In terms of assembly, part of the 50S ribosomal subunit.

Functionally, binds to the 23S rRNA. The sequence is that of Large ribosomal subunit protein uL15 from Geotalea uraniireducens (strain Rf4) (Geobacter uraniireducens).